A 389-amino-acid chain; its full sequence is Formate-dependent phosphoribosylglycinamide formyltransferase (389 aa).

N(1)-(5-phospho-beta-D-ribosyl)glycinamide is bound by residues 12–13 (EL) and glutamate 72. ATP is bound by residues arginine 104, lysine 145, 150–155 (SSGKGQ), 185–188 (EAFV), and glutamate 193. Residues 109–300 (DLASKELGLR…EFELHARAVL (192 aa)) form the ATP-grasp domain. The Mg(2+) site is built by glutamate 258 and glutamate 270. Residues aspartate 277, lysine 348, and 355 to 356 (RR) contribute to the N(1)-(5-phospho-beta-D-ribosyl)glycinamide site.

Belongs to the PurK/PurT family. Homodimer.

The enzyme catalyses N(1)-(5-phospho-beta-D-ribosyl)glycinamide + formate + ATP = N(2)-formyl-N(1)-(5-phospho-beta-D-ribosyl)glycinamide + ADP + phosphate + H(+). It functions in the pathway purine metabolism; IMP biosynthesis via de novo pathway; N(2)-formyl-N(1)-(5-phospho-D-ribosyl)glycinamide from N(1)-(5-phospho-D-ribosyl)glycinamide (formate route): step 1/1. Involved in the de novo purine biosynthesis. Catalyzes the transfer of formate to 5-phospho-ribosyl-glycinamide (GAR), producing 5-phospho-ribosyl-N-formylglycinamide (FGAR). Formate is provided by PurU via hydrolysis of 10-formyl-tetrahydrofolate. This chain is Formate-dependent phosphoribosylglycinamide formyltransferase, found in Chlorobium phaeobacteroides (strain DSM 266 / SMG 266 / 2430).